Here is a 114-residue protein sequence, read N- to C-terminus: U17-barytoxin-Tl1a (114 aa).

An N-terminal signal peptide occupies residues 1 to 20; sequence MKTIIVFLSLLVLATKFGDA. Residues 21-74 constitute a propeptide that is removed on maturation; the sequence is NEGVNQEQMKEVIQNEFREDFLNEMAAMSLLQQLEAIESTLLEKEADRNSRQKR. 3 cysteine pairs are disulfide-bonded: Cys-75-Cys-88, Cys-82-Cys-93, and Cys-87-Cys-108.

Belongs to the neurotoxin 14 (magi-1) family. 03 (ICK-30-40) subfamily. As to expression, expressed by the venom gland.

The protein localises to the secreted. In terms of biological role, ion channel inhibitor. The sequence is that of U17-barytoxin-Tl1a from Trittame loki (Brush-footed trapdoor spider).